The following is a 276-amino-acid chain: Expansin-like A3 (276 aa).

The first 28 residues, 1–28 (MAVLLSILSSSFLLLLAASSSSTPRASA), serve as a signal peptide directing secretion. In terms of domain architecture, Expansin-like EG45 spans 52 to 158 (GGGCGYGAMA…RRIPCDYKDK (107 aa)). Residues Asn-115 and Asn-159 are each glycosylated (N-linked (GlcNAc...) asparagine). Positions 172–255 (NNLVIKFLYQ…NWQPGQVYDT (84 aa)) constitute an Expansin-like CBD domain.

This sequence belongs to the expansin family. Expansin-like A subfamily.

The protein localises to the secreted. This Oryza sativa subsp. japonica (Rice) protein is Expansin-like A3 (EXLA3).